A 531-amino-acid polypeptide reads, in one-letter code: MKDRFKQKYTAGAAVAYMSRKQALKKLQLTLKDFRRLCIIKGIYPHEPAHKKQANKGSTANKVFYYRKDINFLAHEPIINKFRDYKVFLRKLNHLKAKKEEDKLKKLYENKPVYSLDTIVKERFPTFGSALRDMDDALSLCFTFAMLPHTRVLKEGMIDSCRKLTAEFMHYVIESQSLRNTFISIKGIYYQAEVHGEKITWVVPHERGLPHVTDVDFTVLVTFVEFYIAMLGFVNFKLYQDIGLFYPPQIGQVVKTDEMETEEYKEKVYSLAKPLAKRKDVEQAEDDEPLDLLGEDSDALAQKVREAKSIKTMFKGCVFYLNRECPKEALTFIIRNGGGIVGWEGGPTDLKADSKNISHHVVDRPMDKLEVNRLYVQPQWVFDCLNARRKLPTERYMPGVALPPHFSPFTSEKAGDYIPFERLEELRSMGKDVSDLEAAIPKTMDELPMRRKEVKPEKPKGIHIAVGQMHKKSKEKFHETVEKGQELKMRELMISKKHQRVYHSMKTTFKRNRNDALKLKKKAKLAKATEA.

The BRCT domain maps to 309–398; the sequence is SIKTMFKGCV…RKLPTERYMP (90 aa).

This sequence belongs to the pescadillo family.

It localises to the nucleus. Its subcellular location is the nucleolus. The protein resides in the nucleoplasm. Its function is as follows. Required for maturation of ribosomal RNAs and formation of the large ribosomal subunit. This Caenorhabditis elegans protein is Pescadillo homolog.